The sequence spans 241 residues: CD99 antigen-like protein 2 (241 aa).

Positions M1 to G23 are cleaved as a signal peptide. At D24–G173 the chain is on the extracellular side. Residues D30–S168 are disordered. A compositionally biased stretch (gly residues) spans G143–T154. A helical membrane pass occupies residues T174–Y196. The Cytoplasmic segment spans residues Q197–P241.

It belongs to the CD99 family.

The protein localises to the cell membrane. Its subcellular location is the cell junction. In terms of biological role, may function as a homophilic adhesion molecule. The chain is CD99 antigen-like protein 2 (cd99l2) from Xenopus tropicalis (Western clawed frog).